Consider the following 454-residue polypeptide: MSDAEATAPRSSWRFAGRDEDDQPSLREVNSTIAVPSSGVWFRRLFAFMGPGYMVSVGYMDPGNWATDLAGGAQFGYTLLFVIMLSNLMAILLQALAARLGIATGRDLAQACRAYYPRPVNFVLWIACELAIIACDLAEVIGTAIALKLLFGIPLIGGAILTALDAFLVLLLMNKGFRYLEAFVIALLIIIFSCFAIQIFVAAPPAGTILHSMFVPSSEIVTNPAMLYIAIGIIGATVMPHNLYLHSSIVQTRAYERTEKGKRDAIKWATTDSTIALMLALFVNAAILIVSAVAFHNTGHQDVAEIDQAFELLSPLLGLGIASILFAVALLASGLNSTVTATLAGQIIMEGFLRLRIPNWARRLLTRGLAIVPVVVVTALYGEKGTGQLLVFSQVILSMQLPFAVVPLVQFVSDKKKMGNLAIPRGVAALAWVVAAIILVLNFKLLYDTLFGVG.

The segment at 1–21 (MSDAEATAPRSSWRFAGRDED) is disordered. 11 helical membrane-spanning segments follow: residues 45–65 (LFAF…PGNW), 78–98 (TLLF…ALAA), 122–142 (FVLW…EVIG), 153–173 (IPLI…LLLM), 182–202 (AFVI…IFVA), 220–240 (IVTN…TVMP), 275–295 (IALM…AVAF), 312–332 (LLSP…ALLA), 368–388 (GLAI…GTGQ), 389–409 (LLVF…VPLV), and 426–446 (GVAA…FKLL).

It belongs to the NRAMP family.

The protein localises to the cell inner membrane. Its function is as follows. H(+)-stimulated, divalent metal cation uptake system. The protein is Divalent metal cation transporter MntH of Mesorhizobium japonicum (strain LMG 29417 / CECT 9101 / MAFF 303099) (Mesorhizobium loti (strain MAFF 303099)).